Reading from the N-terminus, the 608-residue chain is Phosphogluconate dehydratase (608 aa).

Cysteine 154 and cysteine 221 together coordinate [4Fe-4S] cluster.

It belongs to the IlvD/Edd family. The cofactor is [4Fe-4S] cluster.

It catalyses the reaction 6-phospho-D-gluconate = 2-dehydro-3-deoxy-6-phospho-D-gluconate + H2O. The protein operates within carbohydrate metabolism; Entner-Doudoroff pathway. Functionally, catalyzes the dehydration of 6-phospho-D-gluconate to 2-dehydro-3-deoxy-6-phospho-D-gluconate. This Helicobacter pylori (strain ATCC 700392 / 26695) (Campylobacter pylori) protein is Phosphogluconate dehydratase.